The chain runs to 102 residues: A-type ATP synthase subunit F (102 aa).

It belongs to the V-ATPase F subunit family. Has multiple subunits with at least A(3), B(3), C, D, E, F, H, I and proteolipid K(x).

It localises to the cell membrane. In terms of biological role, component of the A-type ATP synthase that produces ATP from ADP in the presence of a proton gradient across the membrane. In Thermococcus gammatolerans (strain DSM 15229 / JCM 11827 / EJ3), this protein is A-type ATP synthase subunit F.